Reading from the N-terminus, the 288-residue chain is MATYAVGDLQGCLQPLKCLLERVSFNPAVDRLWLVGDLVNRGPESLETLRFLYSIRQSLVCVLGNHDLHLLAAWHNVERLKKSDTLREIIEAPDADPLFDWLRQQKLLHYDEARGIAMAHAGIPPQWTLGQALGYAAEVEEALRDDSRLKLYLDGMYGNEPNKWSKNLTGVERLRVITNYLTRMRFCTAEGKLDLKSKEGLGTAPKGYKPWFAHKGRRSRHVTIIFGHWAALEGRVDEPGIIALDTGCVWGGAMTLYNVDSGEYHRCDCADDGTLRQPAQPTTLNDHT.

This sequence belongs to the Ap4A hydrolase family.

It carries out the reaction P(1),P(4)-bis(5'-adenosyl) tetraphosphate + H2O = 2 ADP + 2 H(+). Its function is as follows. Hydrolyzes diadenosine 5',5'''-P1,P4-tetraphosphate to yield ADP. This chain is Bis(5'-nucleosyl)-tetraphosphatase, symmetrical, found in Pseudomonas putida (strain GB-1).